A 98-amino-acid polypeptide reads, in one-letter code: Secreted LysM effector Mgx1LysM (98 aa).

The signal sequence occupies residues Met-1–Ala-18. 2 disulfides stabilise this stretch: Cys-31-Cys-89 and Cys-62-Cys-97. A LysM domain is found at Ile-37–Ile-85. Chitin is bound by residues Gly-44, Thr-48, Asn-75, and Ile-77.

Belongs to the secreted LysM effector family. As to quaternary structure, forms homodimers in a chitin-independent manner through interactions at the N-termini of Mgx1LysM monomers. Homodimers are further polymerized in a chitin-dependent manner.

The protein localises to the secreted. It localises to the cell wall. Secreted effector that enables the plant pathogenic fungus to manipulate host defenses for successful infection. Binds chitin and suppresses the chitin-induced reactive oxygen species (ROS) burst. Chitin-induced polymerization of homodimers forms a contiguous Mg1LysM highly oligomeric super-complexe that is anchored to the chitin in the fungal cell wall to prevent hydrolysis by host chitinases. This chain is Secreted LysM effector Mgx1LysM, found in Zymoseptoria tritici (strain ST99CH_3D7).